The chain runs to 256 residues: Thiazole synthase (256 aa).

Lys-96 (schiff-base intermediate with DXP) is an active-site residue. 1-deoxy-D-xylulose 5-phosphate is bound by residues Gly-157, 183–184, and 205–206; these read AG and NT.

It belongs to the ThiG family. In terms of assembly, homotetramer. Forms heterodimers with either ThiH or ThiS.

It localises to the cytoplasm. It catalyses the reaction [ThiS sulfur-carrier protein]-C-terminal-Gly-aminoethanethioate + 2-iminoacetate + 1-deoxy-D-xylulose 5-phosphate = [ThiS sulfur-carrier protein]-C-terminal Gly-Gly + 2-[(2R,5Z)-2-carboxy-4-methylthiazol-5(2H)-ylidene]ethyl phosphate + 2 H2O + H(+). It functions in the pathway cofactor biosynthesis; thiamine diphosphate biosynthesis. Functionally, catalyzes the rearrangement of 1-deoxy-D-xylulose 5-phosphate (DXP) to produce the thiazole phosphate moiety of thiamine. Sulfur is provided by the thiocarboxylate moiety of the carrier protein ThiS. In vitro, sulfur can be provided by H(2)S. The sequence is that of Thiazole synthase from Bacillus anthracis.